We begin with the raw amino-acid sequence, 444 residues long: ATP-dependent protease ATPase subunit HslU (444 aa).

ATP is bound by residues Ile-20, 62–67 (GVGKTE), Asp-257, Glu-322, and Arg-394.

The protein belongs to the ClpX chaperone family. HslU subfamily. A double ring-shaped homohexamer of HslV is capped on each side by a ring-shaped HslU homohexamer. The assembly of the HslU/HslV complex is dependent on binding of ATP.

The protein resides in the cytoplasm. In terms of biological role, ATPase subunit of a proteasome-like degradation complex; this subunit has chaperone activity. The binding of ATP and its subsequent hydrolysis by HslU are essential for unfolding of protein substrates subsequently hydrolyzed by HslV. HslU recognizes the N-terminal part of its protein substrates and unfolds these before they are guided to HslV for hydrolysis. This chain is ATP-dependent protease ATPase subunit HslU, found in Bordetella avium (strain 197N).